The following is a 378-amino-acid chain: Cell surface mannoprotein MP65 (378 aa).

A signal peptide spans 1–32 (MLFKSFVTFTVLANALAAPLAHQHHQHKEEKR). The disordered stretch occupies residues 67 to 124 (VSVSVNTEPPQNHPTTTQDVASASTYPSSTDGSAASSSAAASSSSQAGSEPSGGVGSG). A compositionally biased stretch (polar residues) spans 72–93 (NTEPPQNHPTTTQDVASASTYP). Positions 94 to 116 (SSTDGSAASSSAAASSSSQAGSE) are enriched in low complexity. Glu316 acts as the Nucleophile in catalysis.

The protein belongs to the glycosyl hydrolase 17 family. As to quaternary structure, component of a multiprotein complex of 250 kDa composed of at least HYR1, MP65, and PRA1. Post-translationally, glycosylated protein with a polysaccharide moiety composed exclusively of mannose and glucose at a ratio of 12.7 to 1. Contributes highly to the carbohydrate component of the matrix. Treatment with tunicamycin impairs glycosylation.

The protein resides in the secreted. It is found in the cell wall. Surface mannoprotein required for hyphal morphogenesis, surface adherence, and pathogenicity. Contributes in a high proportion to the carbohydrate component of the matrix due to high levels of glycosylation and may play important roles during biofilm development and maintenance. Acts as a major antigen target of host cell-mediated immune response. Induces extensive T-cell proliferation of human peripheral blood mononuclear cells. Facilitates host dendritic cells maturation and promotes cytokine production through its glycosylated portion while its protein core is essentially involved in induction of T-cell response. The protein is Cell surface mannoprotein MP65 (MP65) of Candida albicans (strain SC5314 / ATCC MYA-2876) (Yeast).